We begin with the raw amino-acid sequence, 524 residues long: MTRRALVSVSDKTGLVPFARRLAALGVELLSTGGTQKALAEAGVPVVGVGDYTQAPEILGGRVKTLHPRVHGGILYRRGLASDEADVKARDIPPIDLVVVNLYPFREAVAAGKPFETCVEEIDIGGPTMVRSAAKNSAHVGVVVDPADYEKVAAELEATRTLSAATRFYLMKKAFAHTAAYDAAISEYLTAREAPEAAPAHFPATLAAVYTKAYDLRYGENPHQAGAFYRAAREPEEPSVAFADVLQGKELSYNNLLDLQAALAGVMEFDETACVIIKHNTPCGVSTGRTAGEAFARARECDPVSAFGGIVALNRPVDEATASELTSLFLECVIAPGYDAAARAALAVKKNLRLLEAPRLGAARATWRRRPEEGRELRSIPGGLLVMDRDLGSVRRDDCKVMTKRAPTEQEWKDLLFAWKVVKHVKSNAIVFAKDDRTVAIGGGQTSRVESVKTAVMKAALDVRGSSVGSDAFFPFADGVEEIIKAGATAIIQPGGSMRDAEVIAAADKAGIAMVATGMRHFRH.

One can recognise an MGS-like domain in the interval 1 to 144; the sequence is MTRRALVSVS…KNSAHVGVVV (144 aa).

The protein belongs to the PurH family.

The enzyme catalyses (6R)-10-formyltetrahydrofolate + 5-amino-1-(5-phospho-beta-D-ribosyl)imidazole-4-carboxamide = 5-formamido-1-(5-phospho-D-ribosyl)imidazole-4-carboxamide + (6S)-5,6,7,8-tetrahydrofolate. It catalyses the reaction IMP + H2O = 5-formamido-1-(5-phospho-D-ribosyl)imidazole-4-carboxamide. Its pathway is purine metabolism; IMP biosynthesis via de novo pathway; 5-formamido-1-(5-phospho-D-ribosyl)imidazole-4-carboxamide from 5-amino-1-(5-phospho-D-ribosyl)imidazole-4-carboxamide (10-formyl THF route): step 1/1. It functions in the pathway purine metabolism; IMP biosynthesis via de novo pathway; IMP from 5-formamido-1-(5-phospho-D-ribosyl)imidazole-4-carboxamide: step 1/1. The chain is Bifunctional purine biosynthesis protein PurH from Anaeromyxobacter dehalogenans (strain 2CP-1 / ATCC BAA-258).